Here is a 126-residue protein sequence, read N- to C-terminus: MLLNIAVICLAACVGALMRWGFALWLNPGGLIPWGTLAVNLIGGYCIGIALAVFTSRPDIDPAWRLLVITGFLGTLTTFSSFSGEVVTMLMQQRFGLAFGTIALHLGGSLALTWAGMRSALWWLAR.

A run of 4 helical transmembrane segments spans residues 5 to 25 (IAVI…FALW), 34 to 54 (WGTL…LAVF), 67 to 87 (LVIT…GEVV), and 95 to 115 (FGLA…LTWA). Na(+)-binding residues include Gly-74 and Thr-77.

It belongs to the fluoride channel Fluc/FEX (TC 1.A.43) family.

The protein localises to the cell inner membrane. The enzyme catalyses fluoride(in) = fluoride(out). Its activity is regulated as follows. Na(+) is not transported, but it plays an essential structural role and its presence is essential for fluoride channel function. Its function is as follows. Fluoride-specific ion channel. Important for reducing fluoride concentration in the cell, thus reducing its toxicity. The chain is Fluoride-specific ion channel FluC from Paracidovorax citrulli (strain AAC00-1) (Acidovorax citrulli).